Reading from the N-terminus, the 501-residue chain is Probable sucrose utilization protein SUC1 (501 aa).

A DNA-binding region (zn(2)-C6 fungal-type) is located at residues 13–39 (CDSCSFRKVKCDMKTPCSRCVLNNLKC).

This sequence belongs to the MAL13 family.

It localises to the nucleus. Its function is as follows. Affects sucrose utilization and alpha-glucosidase activity. Probable transcriptional activator. This Candida albicans (strain SC5314 / ATCC MYA-2876) (Yeast) protein is Probable sucrose utilization protein SUC1 (SUC1).